The chain runs to 391 residues: DNA primase small subunit PriS (391 aa).

Catalysis depends on residues Asp98, Asp100, and Asp294.

It belongs to the eukaryotic-type primase small subunit family. As to quaternary structure, heterodimer of a small subunit (PriS) and a large subunit (PriL). Requires Mg(2+) as cofactor. The cofactor is Mn(2+).

In terms of biological role, catalytic subunit of DNA primase, an RNA polymerase that catalyzes the synthesis of short RNA molecules used as primers for DNA polymerase during DNA replication. The small subunit contains the primase catalytic core and has DNA synthesis activity on its own. Binding to the large subunit stabilizes and modulates the activity, increasing the rate of DNA synthesis while decreasing the length of the DNA fragments, and conferring RNA synthesis capability. The DNA polymerase activity may enable DNA primase to also catalyze primer extension after primer synthesis. May also play a role in DNA repair. This Halobacterium salinarum (strain ATCC 29341 / DSM 671 / R1) protein is DNA primase small subunit PriS.